Here is a 391-residue protein sequence, read N- to C-terminus: Ferrochelatase (391 aa).

2 residues coordinate Fe cation: H196 and E281.

The protein belongs to the ferrochelatase family.

The protein resides in the cytoplasm. The enzyme catalyses heme b + 2 H(+) = protoporphyrin IX + Fe(2+). The protein operates within porphyrin-containing compound metabolism; protoheme biosynthesis; protoheme from protoporphyrin-IX: step 1/1. In terms of biological role, catalyzes the ferrous insertion into protoporphyrin IX. This chain is Ferrochelatase, found in Synechococcus sp. (strain CC9605).